The chain runs to 580 residues: MPIVAQSTETTDWVSRFADEVIAESERRAPGKPGVVVASGLSPSGPIHLGNLREVMTPHLVADEVRRRGHEVRHLISWDDYDRYRKVPAGVPGVDESWAEHIGKPLTSVPAPKGSPHPNWAEHFKAAMVDSLAEMGVEFDGISQTAQYTSGVYREQILHAMKHRRDIDAILDQYRTKKAPAKKSQKPLDEAELEAAEGSGAAAEDDGSSGSAGYFPYKPYCGNCEKDLTTVTAYDDDSTELTYACTACGFSETVRLSEFNRGKLVWKVDWPMRWAYEGVVFEPSGVDHSSPGSSFQVGGQIVGIFGGEQPIGPMYAFVGISGMAKMSSSKGGVPTPADALKIMEPQLLRWLYARRRPNQSFKIAFDQEIQRLYDEWDRLDAKVADGSALPADAAAHARAVGTAAGELPRTPRPLPYRTLASVADITAGHEDQALRILGELDPANPIASLDEARPRYDKAEAWINTHVPADQRTIVRQEPDAELLKSLDEPSRQSLRLLLDGLADHWSLDGLTHHVYGVPKVQAGFPADATPKELPPEIKTAQRTFFALLYHLLVGRDTGPRLPTLLLAVGQDRVRTLLGE.

The 'HIGH' region signature appears at 43–51 (PSGPIHLGN). The interval 178–209 (KAPAKKSQKPLDEAELEAAEGSGAAAEDDGSS) is disordered. The segment covering 196–209 (AEGSGAAAEDDGSS) has biased composition (low complexity). Residues 325–329 (KMSSS) carry the 'KMSKS' region motif.

Belongs to the class-I aminoacyl-tRNA synthetase family.

It is found in the cytoplasm. It catalyses the reaction tRNA(Lys) + L-lysine + ATP = L-lysyl-tRNA(Lys) + AMP + diphosphate. In Streptomyces coelicolor (strain ATCC BAA-471 / A3(2) / M145), this protein is Lysine--tRNA ligase (lysS).